The following is a 372-amino-acid chain: Aminomethyltransferase (372 aa).

Belongs to the GcvT family. As to quaternary structure, the glycine cleavage system is composed of four proteins: P, T, L and H.

It carries out the reaction N(6)-[(R)-S(8)-aminomethyldihydrolipoyl]-L-lysyl-[protein] + (6S)-5,6,7,8-tetrahydrofolate = N(6)-[(R)-dihydrolipoyl]-L-lysyl-[protein] + (6R)-5,10-methylene-5,6,7,8-tetrahydrofolate + NH4(+). The glycine cleavage system catalyzes the degradation of glycine. This chain is Aminomethyltransferase, found in Burkholderia multivorans (strain ATCC 17616 / 249).